We begin with the raw amino-acid sequence, 341 residues long: Glycerol-3-phosphate dehydrogenase [NAD(P)+] (341 aa).

Positions 13, 14, and 108 each coordinate NADPH. Positions 108, 139, and 141 each coordinate sn-glycerol 3-phosphate. Alanine 143 lines the NADPH pocket. Sn-glycerol 3-phosphate-binding residues include lysine 194, aspartate 247, serine 257, arginine 258, and asparagine 259. Catalysis depends on lysine 194, which acts as the Proton acceptor. NADPH is bound at residue arginine 258. Residues valine 282 and glutamate 284 each contribute to the NADPH site.

It belongs to the NAD-dependent glycerol-3-phosphate dehydrogenase family.

Its subcellular location is the cytoplasm. It catalyses the reaction sn-glycerol 3-phosphate + NAD(+) = dihydroxyacetone phosphate + NADH + H(+). It carries out the reaction sn-glycerol 3-phosphate + NADP(+) = dihydroxyacetone phosphate + NADPH + H(+). It functions in the pathway membrane lipid metabolism; glycerophospholipid metabolism. Catalyzes the reduction of the glycolytic intermediate dihydroxyacetone phosphate (DHAP) to sn-glycerol 3-phosphate (G3P), the key precursor for phospholipid synthesis. The polypeptide is Glycerol-3-phosphate dehydrogenase [NAD(P)+] (Lactococcus lactis subsp. lactis (strain IL1403) (Streptococcus lactis)).